Here is a 400-residue protein sequence, read N- to C-terminus: Cartilage-associated protein (400 aa).

A signal peptide spans 1-25 (MGPRSPTAALLVLLCVGCAPTPGRG). 2 N-linked (GlcNAc...) asparagine glycosylation sites follow: asparagine 86 and asparagine 362.

The protein belongs to the leprecan family. As to expression, found in articular chondrocytes. Expressed in a variety of tissues.

The protein resides in the secreted. Its subcellular location is the extracellular space. The protein localises to the extracellular matrix. Necessary for efficient 3-hydroxylation of fibrillar collagen prolyl residues. This chain is Cartilage-associated protein (Crtap), found in Mus musculus (Mouse).